Reading from the N-terminus, the 312-residue chain is Methionyl-tRNA formyltransferase (312 aa).

A (6S)-5,6,7,8-tetrahydrofolate-binding site is contributed by 109-112 (SLLP).

Belongs to the Fmt family.

It carries out the reaction L-methionyl-tRNA(fMet) + (6R)-10-formyltetrahydrofolate = N-formyl-L-methionyl-tRNA(fMet) + (6S)-5,6,7,8-tetrahydrofolate + H(+). Attaches a formyl group to the free amino group of methionyl-tRNA(fMet). The formyl group appears to play a dual role in the initiator identity of N-formylmethionyl-tRNA by promoting its recognition by IF2 and preventing the misappropriation of this tRNA by the elongation apparatus. This chain is Methionyl-tRNA formyltransferase, found in Listeria innocua serovar 6a (strain ATCC BAA-680 / CLIP 11262).